The sequence spans 232 residues: Large ribosomal subunit protein uL1 (232 aa).

The protein belongs to the universal ribosomal protein uL1 family. In terms of assembly, part of the 50S ribosomal subunit.

Its function is as follows. Binds directly to 23S rRNA. The L1 stalk is quite mobile in the ribosome, and is involved in E site tRNA release. Protein L1 is also a translational repressor protein, it controls the translation of the L11 operon by binding to its mRNA. The protein is Large ribosomal subunit protein uL1 of Dinoroseobacter shibae (strain DSM 16493 / NCIMB 14021 / DFL 12).